We begin with the raw amino-acid sequence, 569 residues long: Potassium-transporting ATPase potassium-binding subunit (569 aa).

Transmembrane regions (helical) follow at residues 5 to 25 (GWAEIALTLGLAVAIGWPLGV), 65 to 85 (GYAGALLAFNFVGFLLVYAVL), 135 to 155 (LVLTVQNFLSAATGATVAAAL), 179 to 199 (LYVLLPLSFVVAIVLVALGLP), 254 to 274 (LTNLITAVSINVLGWAAFFAF), 286 to 306 (ALVIAASILLSAGAATVYWTE), 383 to 403 (GIAVMIVMAVLAVFVAGLMVG), 422 to 442 (LLTVLAIPVATLGFSAIAAVL), 489 to 509 (MGVAMAMGRFMPIVAVLAMAG), and 528 to 548 (GGLFVGLLIGVILILGGLQFF).

It belongs to the KdpA family. The system is composed of three essential subunits: KdpA, KdpB and KdpC.

Its subcellular location is the cell inner membrane. In terms of biological role, part of the high-affinity ATP-driven potassium transport (or Kdp) system, which catalyzes the hydrolysis of ATP coupled with the electrogenic transport of potassium into the cytoplasm. This subunit binds the periplasmic potassium ions and delivers the ions to the membrane domain of KdpB through an intramembrane tunnel. This chain is Potassium-transporting ATPase potassium-binding subunit, found in Caulobacter sp. (strain K31).